We begin with the raw amino-acid sequence, 371 residues long: MLKFTLHKKDGYARRGTLELNHGKIETPVFMPVGTYGSVKAMNPQNLHDIKAQIILGNTYHLWLRPGLEVVEQFGGLHGFIGWDKPILTDSGGFQVFSLSDMRKLTEEGCTFKSPINGDKLFLSPEISMKIQTVLNSDIAMQLDECTPGEATREQAKKSLQMSLRWAERSKKAFEDLKNPNALFGIVQGAMYEDLREESLRGLEQFDFPGLAVGGLSVGEPKPEMYRMLRAVGPILPEHKPHYLMGVGTPEDLVYGVAHGIDMFDCVMPTRNARNGWLFTRFGDLKIKNAKHKLDKRPIDESCTCYACQNFSRAYLHHLHRTGEILGAQLNTIHNLHFYQVIMAEMREAVEQGKFADWQARFHENRARGTD.

Asp90 functions as the Proton acceptor in the catalytic mechanism. Residues 90–94, Asp144, Gln188, and Gly215 contribute to the substrate site; that span reads DSGGF. The interval 246–252 is RNA binding; it reads GVGTPED. Asp265 acts as the Nucleophile in catalysis. The tract at residues 270–274 is RNA binding; important for wobble base 34 recognition; the sequence is TRNAR. 4 residues coordinate Zn(2+): Cys303, Cys305, Cys308, and His334.

The protein belongs to the queuine tRNA-ribosyltransferase family. Homodimer. Within each dimer, one monomer is responsible for RNA recognition and catalysis, while the other monomer binds to the replacement base PreQ1. Zn(2+) serves as cofactor.

It catalyses the reaction 7-aminomethyl-7-carbaguanine + guanosine(34) in tRNA = 7-aminomethyl-7-carbaguanosine(34) in tRNA + guanine. It participates in tRNA modification; tRNA-queuosine biosynthesis. In terms of biological role, catalyzes the base-exchange of a guanine (G) residue with the queuine precursor 7-aminomethyl-7-deazaguanine (PreQ1) at position 34 (anticodon wobble position) in tRNAs with GU(N) anticodons (tRNA-Asp, -Asn, -His and -Tyr). Catalysis occurs through a double-displacement mechanism. The nucleophile active site attacks the C1' of nucleotide 34 to detach the guanine base from the RNA, forming a covalent enzyme-RNA intermediate. The proton acceptor active site deprotonates the incoming PreQ1, allowing a nucleophilic attack on the C1' of the ribose to form the product. After dissociation, two additional enzymatic reactions on the tRNA convert PreQ1 to queuine (Q), resulting in the hypermodified nucleoside queuosine (7-(((4,5-cis-dihydroxy-2-cyclopenten-1-yl)amino)methyl)-7-deazaguanosine). The protein is Queuine tRNA-ribosyltransferase of Neisseria meningitidis serogroup C / serotype 2a (strain ATCC 700532 / DSM 15464 / FAM18).